The chain runs to 101 residues: Small ribosomal subunit protein bS6 (101 aa).

The protein belongs to the bacterial ribosomal protein bS6 family.

In terms of biological role, binds together with bS18 to 16S ribosomal RNA. The sequence is that of Small ribosomal subunit protein bS6 from Nitratidesulfovibrio vulgaris (strain ATCC 29579 / DSM 644 / CCUG 34227 / NCIMB 8303 / VKM B-1760 / Hildenborough) (Desulfovibrio vulgaris).